The following is a 418-amino-acid chain: Alpha-tubulin N-acetyltransferase 1 (418 aa).

The N-acetyltransferase domain occupies 1–186; it reads MEFEFDVHKI…NNFVVFEGFF (186 aa). Acetyl-CoA-binding positions include 120 to 133 and 156 to 165; these read FYIHESLQRHGFGK and SEKFLSFLRK. Disordered stretches follow at residues 237–292 and 322–353; these read SSLG…MNLS and QIKEQQSRTDSSAQEGRTQDRPNGSNSQHQND. Residues 277-287 show a composition bias toward basic and acidic residues; it reads QEDHSQRRRTS. Polar residues predominate over residues 329–353; it reads RTDSSAQEGRTQDRPNGSNSQHQND.

It belongs to the acetyltransferase ATAT1 family.

It localises to the cytoplasm. The protein resides in the membrane. Its subcellular location is the clathrin-coated pit. It is found in the cell junction. The protein localises to the focal adhesion. It localises to the cell projection. The protein resides in the axon. Its subcellular location is the cytoskeleton. It is found in the spindle. The catalysed reaction is L-lysyl-[alpha-tubulin] + acetyl-CoA = N(6)-acetyl-L-lysyl-[alpha-tubulin] + CoA + H(+). Its function is as follows. Specifically acetylates 'Lys-40' in alpha-tubulin on the lumenal side of microtubules. Promotes microtubule destabilization and accelerates microtubule dynamics; this activity may be independent of acetylation activity. Acetylates alpha-tubulin with a slow enzymatic rate, due to a catalytic site that is not optimized for acetyl transfer. Enters the microtubule through each end and diffuses quickly throughout the lumen of microtubules. Acetylates only long/old microtubules because of its slow acetylation rate since it does not have time to act on dynamically unstable microtubules before the enzyme is released. May be involved in neuron development. The sequence is that of Alpha-tubulin N-acetyltransferase 1 from Xenopus laevis (African clawed frog).